The following is a 159-amino-acid chain: Eukaryotic translation initiation factor 5A (159 aa).

Lysine 55 is subject to Hypusine.

Belongs to the eIF-5A family. Post-translationally, lys-55 undergoes hypusination, a unique post-translational modification that consists in the addition of a butylamino group from spermidine to lysine side chain, leading to the formation of the unusual amino acid hypusine. eIF-5As are the only known proteins to undergo this modification, which is essential for their function.

Its subcellular location is the cytoplasm. Its function is as follows. Translation factor that promotes translation elongation and termination, particularly upon ribosome stalling at specific amino acid sequence contexts. Binds between the exit (E) and peptidyl (P) site of the ribosome and promotes rescue of stalled ribosome: specifically required for efficient translation of polyproline-containing peptides as well as other motifs that stall the ribosome. Acts as a ribosome quality control (RQC) cofactor by joining the RQC complex to facilitate peptidyl transfer during CAT tailing step. This is Eukaryotic translation initiation factor 5A (eif5a) from Dictyostelium discoideum (Social amoeba).